The following is a 239-amino-acid chain: Orotidine 5'-phosphate decarboxylase (239 aa).

Substrate-binding positions include Asp-15, Lys-36, 63–72, Thr-127, Arg-189, Gln-198, Gly-218, and Arg-219; that span reads DLKFHDIPNT. The active-site Proton donor is the Lys-65.

It belongs to the OMP decarboxylase family. Type 1 subfamily. As to quaternary structure, homodimer.

It catalyses the reaction orotidine 5'-phosphate + H(+) = UMP + CO2. It participates in pyrimidine metabolism; UMP biosynthesis via de novo pathway; UMP from orotate: step 2/2. Functionally, catalyzes the decarboxylation of orotidine 5'-monophosphate (OMP) to uridine 5'-monophosphate (UMP). The sequence is that of Orotidine 5'-phosphate decarboxylase from Prochlorococcus marinus (strain MIT 9515).